The following is a 482-amino-acid chain: tRNA sulfurtransferase (482 aa).

Residues 61-165 (KETLEVLTQT…NDKLNQVIER (105 aa)) form the THUMP domain. Residues 183-184 (LI), Lys-265, Gly-287, and Gln-296 each bind ATP. Cys-344 and Cys-456 are joined by a disulfide. The region spanning 404–482 (VAEHAVVLDI…GFHNVKVYRP (79 aa)) is the Rhodanese domain. Cys-456 (cysteine persulfide intermediate) is an active-site residue.

The protein belongs to the ThiI family.

It localises to the cytoplasm. The catalysed reaction is [ThiI sulfur-carrier protein]-S-sulfanyl-L-cysteine + a uridine in tRNA + 2 reduced [2Fe-2S]-[ferredoxin] + ATP + H(+) = [ThiI sulfur-carrier protein]-L-cysteine + a 4-thiouridine in tRNA + 2 oxidized [2Fe-2S]-[ferredoxin] + AMP + diphosphate. It carries out the reaction [ThiS sulfur-carrier protein]-C-terminal Gly-Gly-AMP + S-sulfanyl-L-cysteinyl-[cysteine desulfurase] + AH2 = [ThiS sulfur-carrier protein]-C-terminal-Gly-aminoethanethioate + L-cysteinyl-[cysteine desulfurase] + A + AMP + 2 H(+). The protein operates within cofactor biosynthesis; thiamine diphosphate biosynthesis. Functionally, catalyzes the ATP-dependent transfer of a sulfur to tRNA to produce 4-thiouridine in position 8 of tRNAs, which functions as a near-UV photosensor. Also catalyzes the transfer of sulfur to the sulfur carrier protein ThiS, forming ThiS-thiocarboxylate. This is a step in the synthesis of thiazole, in the thiamine biosynthesis pathway. The sulfur is donated as persulfide by IscS. The protein is tRNA sulfurtransferase of Vibrio atlanticus (strain LGP32) (Vibrio splendidus (strain Mel32)).